The following is a 649-amino-acid chain: Sulfate transporter 1.1 (649 aa).

Residues 1–20 (MSGTINPPDGGGSGARNPPV) form a disordered region. The Cytoplasmic segment spans residues 1–86 (MSGTINPPDG…AREYTLRKFR (86 aa)). The chain crosses the membrane as a helical span at residues 87 to 107 (GDLIAGLTIASLCIPQDIGYA). The Extracellular portion of the chain corresponds to 108-111 (KLAN). A helical transmembrane segment spans residues 112-132 (VDPKYGLYSSFVPPLIYAGMG). At 133–136 (SSRD) the chain is on the cytoplasmic side. The chain crosses the membrane as a helical span at residues 137–157 (IAIGPVAVVSLLVGTLCQAVI). The Extracellular portion of the chain corresponds to 158–168 (DPKKNPEDYLR). Transmembrane regions (helical) follow at residues 169–189 (LVFTATFFAGIFQAGLGFLRL) and 190–210 (GFLIDFLSHAAVVGFMGGAAI). Residues 211-248 (TIALQQLKGFLGIKTFTKKTDIVSVMHSVFKNAEHGWN) lie on the Extracellular side of the membrane. A helical membrane pass occupies residues 249–269 (WQTIVIGASFLTFLLVTKFIG). The Cytoplasmic segment spans residues 270–275 (KRNRKL). A helical membrane pass occupies residues 276–296 (FWVPAIAPLISVIISTFFVFI). Over 297-334 (FRADKQGVQIVKHIDQGINPISVHKIFFSGKYFTEGIR) the chain is Extracellular. Residues 335-355 (IGGIAGMVALTEAVAIARTFA) traverse the membrane as a helical segment. The Cytoplasmic portion of the chain corresponds to 356-367 (AMKDYQIDGNKE). The helical transmembrane segment at 368-388 (MIALGTMNVVGSMTSCYIATG) threads the bilayer. Residues 389-404 (SFSRSAVNFMAGVETA) lie on the Extracellular side of the membrane. A helical transmembrane segment spans residues 405-425 (VSNIVMAIVVALTLEFITPLF). Residues 426 to 431 (KYTPNA) are Cytoplasmic-facing. The helical transmembrane segment at 432–452 (ILAAIIISAVLGLIDIDAAIL) threads the bilayer. Residues 453–465 (IWRIDKLDFLACM) lie on the Extracellular side of the membrane. Residues 466-486 (GAFLGVIFISVEIGLLIAVVI) form a helical membrane-spanning segment. Residues 487-649 (SFAKILLQVT…CSTEVAEQQT (163 aa)) are Cytoplasmic-facing. An STAS domain is found at 517–640 (QYPDAAQIPG…LTVGDAVAVC (124 aa)).

This sequence belongs to the SLC26A/SulP transporter (TC 2.A.53) family. As to quaternary structure, interacts with OASA1 through its STAS domain. Expressed in lateral root cap, root hairs, epidermal and cortical cells of roots.

The protein localises to the membrane. Functionally, high-affinity H(+)/sulfate cotransporter that mediates the uptake of the environmental sulfate by plant roots under low-sulfur conditions. Plays a central role in the regulation of sulfate assimilation. The protein is Sulfate transporter 1.1 (SULTR1;1) of Arabidopsis thaliana (Mouse-ear cress).